The sequence spans 158 residues: Cystin-1 (158 aa).

Residues 1-146 (MGSGSSRSSR…AAISYDHSEE (146 aa)) are disordered. Residue Gly2 is the site of N-myristoyl glycine attachment. Low complexity-rich tracts occupy residues 19 to 32 (ESLPAGPGAAALEG) and 39 to 52 (PVAAAEVPGAAAEE). Residues 29–33 (ALEGG) carry the Ciliary targeting motif motif. Basic and acidic residues predominate over residues 65-75 (DGRDETLRLLD).

As to quaternary structure, interacts (when myristoylated) with UNC119 and UNC119B; interaction is required for localization to cilium. In terms of tissue distribution, expressed at high levels in the kidney and pancreas. Moderate expression seen in the skeletal muscle, liver and heart. A weak expression seen in the brain, lung, uterus, prostate, testis, small intestine and colon.

The protein resides in the cell projection. Its subcellular location is the cilium membrane. It is found in the cytoplasm. It localises to the cytoskeleton. The protein localises to the cilium axoneme. The protein is Cystin-1 (CYS1) of Homo sapiens (Human).